We begin with the raw amino-acid sequence, 264 residues long: 3-methyl-2-oxobutanoate hydroxymethyltransferase (264 aa).

D45 and D84 together coordinate Mg(2+). 3-methyl-2-oxobutanoate is bound by residues 45–46 (DS), D84, and K112. Position 114 (E114) interacts with Mg(2+). E181 serves as the catalytic Proton acceptor.

It belongs to the PanB family. As to quaternary structure, homodecamer; pentamer of dimers. Mg(2+) serves as cofactor.

The protein localises to the cytoplasm. It carries out the reaction 3-methyl-2-oxobutanoate + (6R)-5,10-methylene-5,6,7,8-tetrahydrofolate + H2O = 2-dehydropantoate + (6S)-5,6,7,8-tetrahydrofolate. It participates in cofactor biosynthesis; (R)-pantothenate biosynthesis; (R)-pantoate from 3-methyl-2-oxobutanoate: step 1/2. Its function is as follows. Catalyzes the reversible reaction in which hydroxymethyl group from 5,10-methylenetetrahydrofolate is transferred onto alpha-ketoisovalerate to form ketopantoate. The protein is 3-methyl-2-oxobutanoate hydroxymethyltransferase of Escherichia coli O17:K52:H18 (strain UMN026 / ExPEC).